The sequence spans 39 residues: Photosystem II reaction center protein J (39 aa).

Residues 9–29 traverse the membrane as a helical segment; that stretch reads LWMVATVGGLAAGGLLILFVF.

Belongs to the PsbJ family. PSII is composed of 1 copy each of membrane proteins PsbA, PsbB, PsbC, PsbD, PsbE, PsbF, PsbH, PsbI, PsbJ, PsbK, PsbL, PsbM, PsbT, PsbX, PsbY, PsbZ, Psb30/Ycf12, at least 3 peripheral proteins of the oxygen-evolving complex and a large number of cofactors. It forms dimeric complexes.

The protein localises to the plastid. It localises to the chloroplast thylakoid membrane. One of the components of the core complex of photosystem II (PSII). PSII is a light-driven water:plastoquinone oxidoreductase that uses light energy to abstract electrons from H(2)O, generating O(2) and a proton gradient subsequently used for ATP formation. It consists of a core antenna complex that captures photons, and an electron transfer chain that converts photonic excitation into a charge separation. This is Photosystem II reaction center protein J from Emiliania huxleyi (Coccolithophore).